The chain runs to 410 residues: Arginine deiminase (410 aa).

The active-site Amidino-cysteine intermediate is C400.

It belongs to the arginine deiminase family.

It localises to the cytoplasm. It carries out the reaction L-arginine + H2O = L-citrulline + NH4(+). It functions in the pathway amino-acid degradation; L-arginine degradation via ADI pathway; carbamoyl phosphate from L-arginine: step 1/2. This is Arginine deiminase from Lactococcus lactis subsp. cremoris (strain MG1363).